Reading from the N-terminus, the 396-residue chain is Elongation factor Tu (396 aa).

Residues 10–206 form the tr-type G domain; that stretch reads KEHVNIGTIG…AVDTWIETPV (197 aa). Positions 19–26 are G1; sequence GHVDHGKT. 19-26 contacts GTP; it reads GHVDHGKT. Thr26 contacts Mg(2+). The tract at residues 60–64 is G2; sequence GITIN. Residues 81 to 84 are G3; that stretch reads DCPG. GTP is bound by residues 81–85 and 136–139; these read DCPGH and NKCD. Residues 136-139 are G4; sequence NKCD. The segment at 176-178 is G5; the sequence is SAL.

Belongs to the TRAFAC class translation factor GTPase superfamily. Classic translation factor GTPase family. EF-Tu/EF-1A subfamily. Monomer.

It is found in the cytoplasm. The catalysed reaction is GTP + H2O = GDP + phosphate + H(+). GTP hydrolase that promotes the GTP-dependent binding of aminoacyl-tRNA to the A-site of ribosomes during protein biosynthesis. The chain is Elongation factor Tu from Mycoplasmopsis agalactiae (strain NCTC 10123 / CIP 59.7 / PG2) (Mycoplasma agalactiae).